Here is a 320-residue protein sequence, read N- to C-terminus: MTDAAIAEKDLGNAAYKQKDFEKAHVHYDKAIELDPSNITFYNNKAAVYFEEKKFAECVQFCEKAVEVGRETRADYKLIAKAMSRAGNAFQKQNDLSLAVQWFHRSLSEFRDPELVKKVKELEKQLKAAERLAYINPELAQEEKNKGNEYFKKGDYPTAMRHYNEAVKRDPENAILYSNRAACLTKLMEFQRALDDCDTCIRLDSKFIKGYIRKAACLVAMREWSKAQRAYEDALQVDPSNEEAREGVRNCLRSNDEDPEKAKERSLADPEVQEILRDPGMRMILEQMSNDPGAVREHLKNPEIFQKLMKLRDAGVIQMR.

6 TPR repeats span residues 5 to 38 (AIAEKDLGNAAYKQKDFEKAHVHYDKAIELDPSN), 40 to 72 (TFYNNKAAVYFEEKKFAECVQFCEKAVEVGRET), 80 to 113 (AKAMSRAGNAFQKQNDLSLAVQWFHRSLSEFRDP), 140 to 173 (AQEEKNKGNEYFKKGDYPTAMRHYNEAVKRDPEN), 175 to 207 (ILYSNRAACLTKLMEFQRALDDCDTCIRLDSKF), and 208 to 241 (IKGYIRKAACLVAMREWSKAQRAYEDALQVDPSN). The tract at residues 241–269 (NEEAREGVRNCLRSNDEDPEKAKERSLAD) is disordered. A compositionally biased stretch (basic and acidic residues) spans 242 to 269 (EEAREGVRNCLRSNDEDPEKAKERSLAD). Residues 269–308 (DPEVQEILRDPGMRMILEQMSNDPGAVREHLKNPEIFQKL) enclose the STI1 domain.

As to quaternary structure, forms a complex with hsp-1/hsp70 and daf-21/hsp90. Interacts with daf-21/hsp90 (via the C-terminal MEEVD pentapeptide). Expressed ubiquitously in the whole body. Detected predominantly in the pharyngeal muscles, vulva epithelial cells, striated body-wall muscles, spermathecae and intestinal cell ring. Also observed in the tail regions of hermaphrodite and in the sensory rays and spicules of males.

It localises to the cytoplasm. Its function is as follows. Plays a role in gonad development. Up-regulates longevity and thermotolerance. Binds daf-21/hsp90 and inhibits its ATPase activity. This Caenorhabditis elegans protein is Stress-induced-phosphoprotein 1.